Reading from the N-terminus, the 557-residue chain is D-arabinono-1,4-lactone oxidase (557 aa).

Residues phenylalanine 25–lysine 209 form the FAD-binding PCMH-type domain. FAD-binding positions include valine 58–glycine 61, histidine 62–serine 63, isoleucine 144–threonine 148, isoleucine 199, and leucine 543–lysine 546. Residue histidine 62 is modified to Pros-8alpha-FAD histidine.

Belongs to the oxygen-dependent FAD-linked oxidoreductase family. FAD is required as a cofactor.

It catalyses the reaction D-arabinono-1,4-lactone + O2 = dehydro-D-arabinono-1,4-lactone + H2O2 + H(+). It carries out the reaction L-galactono-1,4-lactone + O2 = L-ascorbate + H2O2 + H(+). The catalysed reaction is L-gulono-1,4-lactone + O2 = L-ascorbate + H2O2 + H(+). The enzyme catalyses L-xylono-1,4-lactone + O2 = dehydro-L-arabinono-1,4-lactone + H2O2 + H(+). Its pathway is cofactor biosynthesis; D-erythroascorbate biosynthesis; dehydro-D-arabinono-1,4-lactone from D-arabinose: step 2/2. Functionally, D-arabinono-1,4-lactone oxidase that catalyzes the final step of biosynthesis of D-erythroascorbic acid, an important antioxidant and one of the virulence factors enhancing the pathogenicity. Is also able to oxidize L-galactono-1,4-lactone, L-xylono-1,4-lactone and L-gulono-1,4-lactone. The polypeptide is D-arabinono-1,4-lactone oxidase (Candida albicans (strain SC5314 / ATCC MYA-2876) (Yeast)).